Consider the following 128-residue polypeptide: Large ribosomal subunit protein uL22 (128 aa).

Positions 1 to 20 (MANGHRSQIKRERNAVKDTR) are disordered. Residues 9–20 (IKRERNAVKDTR) are compositionally biased toward basic and acidic residues.

It belongs to the universal ribosomal protein uL22 family. Part of the 50S ribosomal subunit.

This protein binds specifically to 23S rRNA; its binding is stimulated by other ribosomal proteins, e.g. L4, L17, and L20. It is important during the early stages of 50S assembly. It makes multiple contacts with different domains of the 23S rRNA in the assembled 50S subunit and ribosome. Its function is as follows. The globular domain of the protein is located near the polypeptide exit tunnel on the outside of the subunit, while an extended beta-hairpin is found that lines the wall of the exit tunnel in the center of the 70S ribosome. The chain is Large ribosomal subunit protein uL22 from Lachnospira eligens (strain ATCC 27750 / DSM 3376 / VPI C15-48 / C15-B4) (Eubacterium eligens).